A 590-amino-acid polypeptide reads, in one-letter code: Aspartate--tRNA(Asp/Asn) ligase (590 aa).

Glu-175 contacts L-aspartate. An aspartate region spans residues 199–202; that stretch reads QQYK. Positions 221 and 450 each coordinate L-aspartate. 221–223 contacts ATP; the sequence is RDE. Glu-484 contributes to the ATP binding site. An L-aspartate-binding site is contributed by Arg-491. 536–539 is an ATP binding site; the sequence is GVDR.

It belongs to the class-II aminoacyl-tRNA synthetase family. Type 1 subfamily. As to quaternary structure, homodimer.

Its subcellular location is the cytoplasm. It carries out the reaction tRNA(Asx) + L-aspartate + ATP = L-aspartyl-tRNA(Asx) + AMP + diphosphate. Its function is as follows. Aspartyl-tRNA synthetase with relaxed tRNA specificity since it is able to aspartylate not only its cognate tRNA(Asp) but also tRNA(Asn). Reaction proceeds in two steps: L-aspartate is first activated by ATP to form Asp-AMP and then transferred to the acceptor end of tRNA(Asp/Asn). The protein is Aspartate--tRNA(Asp/Asn) ligase of Rhodopseudomonas palustris (strain HaA2).